The chain runs to 87 residues: CRISPR-associated endoribonuclease Cas2 (87 aa).

Aspartate 8 is a binding site for Mg(2+).

Belongs to the CRISPR-associated endoribonuclease Cas2 protein family. Homodimer, forms a heterotetramer with a Cas1 homodimer. Mg(2+) serves as cofactor.

In terms of biological role, CRISPR (clustered regularly interspaced short palindromic repeat), is an adaptive immune system that provides protection against mobile genetic elements (viruses, transposable elements and conjugative plasmids). CRISPR clusters contain sequences complementary to antecedent mobile elements and target invading nucleic acids. CRISPR clusters are transcribed and processed into CRISPR RNA (crRNA). Functions as a ssRNA-specific endoribonuclease. Involved in the integration of spacer DNA into the CRISPR cassette. The polypeptide is CRISPR-associated endoribonuclease Cas2 (Methanosarcina acetivorans (strain ATCC 35395 / DSM 2834 / JCM 12185 / C2A)).